The primary structure comprises 201 residues: Basic helix-loop-helix transcription factor scleraxis (201 aa).

2 disordered regions span residues 1-92 (MSFA…NSVN) and 148-177 (AFFH…QPKQ). The span at 59–69 (RRAGGGGPGGR) shows a compositional bias: gly residues. Residues 70–88 (PGREPRQRHTANARERDRT) show a composition bias toward basic and acidic residues. The 53-residue stretch at 75 to 127 (RQRHTANARERDRTNSVNTAFTALRTLIPTEPADRKLSKIETLRLASSYISHL) folds into the bHLH domain. The span at 157–167 (SPPPPPPPPPA) shows a compositional bias: pro residues.

Efficient DNA binding requires dimerization with another bHLH protein. Dimerizes and binds the E-box consensus sequence with E12.

The protein localises to the nucleus. Its function is as follows. Plays an early essential role in mesoderm formation, as well as a later role in formation of somite-derived chondrogenic lineages. The chain is Basic helix-loop-helix transcription factor scleraxis (SCX) from Homo sapiens (Human).